Here is a 99-residue protein sequence, read N- to C-terminus: NADH dehydrogenase [ubiquinone] 1 alpha subcomplex subunit 2 (99 aa).

A2 is subject to N-acetylalanine. A disulfide bridge connects residues C24 and C58. Position 64 is an N6-acetyllysine; alternate (K64). Position 64 is an N6-succinyllysine; alternate (K64). Position 75 is an N6-acetyllysine (K75).

It belongs to the complex I NDUFA2 subunit family. In terms of assembly, complex I is composed of 45 different subunits.

It localises to the mitochondrion inner membrane. Accessory subunit of the mitochondrial membrane respiratory chain NADH dehydrogenase (Complex I), that is believed not to be involved in catalysis. Complex I functions in the transfer of electrons from NADH to the respiratory chain. The immediate electron acceptor for the enzyme is believed to be ubiquinone. The protein is NADH dehydrogenase [ubiquinone] 1 alpha subcomplex subunit 2 (NDUFA2) of Bos taurus (Bovine).